We begin with the raw amino-acid sequence, 40 residues long: Alpha-1B-glycoprotein (40 aa).

Residue N23 is glycosylated (N-linked (GlcNAc...) asparagine).

As to quaternary structure, interacts with CRISP3. In terms of tissue distribution, plasma.

Its subcellular location is the secreted. This chain is Alpha-1B-glycoprotein (A1BG), found in Sus scrofa (Pig).